Here is a 769-residue protein sequence, read N- to C-terminus: Trehalose 6-phosphate phosphorylase (769 aa).

342 to 343 lines the substrate pocket; sequence WD. The Proton donor role is filled by E480. 589–590 is a substrate binding site; it reads KQ.

The protein belongs to the glycosyl hydrolase 65 family. As to quaternary structure, monomer.

It catalyses the reaction alpha,alpha-trehalose 6-phosphate + phosphate = beta-D-glucose 1-phosphate + D-glucose 6-phosphate. Catalyzes the conversion of trehalose 6-phosphate into glucose 1-phosphate and glucose 6-phosphate. This chain is Trehalose 6-phosphate phosphorylase (trePP), found in Lactococcus lactis subsp. lactis (strain IL1403) (Streptococcus lactis).